The following is a 160-amino-acid chain: SPbeta prophage-derived uncharacterized protein YokE (160 aa).

The polypeptide is SPbeta prophage-derived uncharacterized protein YokE (yokE) (Bacillus subtilis (strain 168)).